The sequence spans 43 residues: uncharacterized protein (43 aa).

This sequence belongs to the ELIP/psbS family.

It is found in the plastid. The protein localises to the chloroplast. Functionally, possible role in chlorophyll and/or carotenoid binding. This is an uncharacterized protein from Cyanidium caldarium (Red alga).